Here is a 199-residue protein sequence, read N- to C-terminus: 7-methyl-GTP pyrophosphatase (199 aa).

Catalysis depends on Asp76, which acts as the Proton acceptor.

The protein belongs to the Maf family. YceF subfamily. Requires a divalent metal cation as cofactor.

The protein localises to the cytoplasm. The catalysed reaction is N(7)-methyl-GTP + H2O = N(7)-methyl-GMP + diphosphate + H(+). Nucleoside triphosphate pyrophosphatase that hydrolyzes 7-methyl-GTP (m(7)GTP). May have a dual role in cell division arrest and in preventing the incorporation of modified nucleotides into cellular nucleic acids. In Rhizobium etli (strain ATCC 51251 / DSM 11541 / JCM 21823 / NBRC 15573 / CFN 42), this protein is 7-methyl-GTP pyrophosphatase.